A 295-amino-acid polypeptide reads, in one-letter code: Tyrosine recombinase XerC (295 aa).

The Core-binding (CB) domain occupies 1 to 85 (MQTYLQKYWN…ALRQFLAFLV (85 aa)). Residues 106–285 (HLPKNINAEQ…NFQHLAEVYD (180 aa)) enclose the Tyr recombinase domain. Residues R145, K169, H237, R240, and H263 contribute to the active site. Catalysis depends on Y272, which acts as the O-(3'-phospho-DNA)-tyrosine intermediate.

It belongs to the 'phage' integrase family. XerC subfamily. Forms a cyclic heterotetrameric complex composed of two molecules of XerC and two molecules of XerD.

The protein localises to the cytoplasm. In terms of biological role, site-specific tyrosine recombinase, which acts by catalyzing the cutting and rejoining of the recombining DNA molecules. The XerC-XerD complex is essential to convert dimers of the bacterial chromosome into monomers to permit their segregation at cell division. It also contributes to the segregational stability of plasmids. The sequence is that of Tyrosine recombinase XerC from Mannheimia succiniciproducens (strain KCTC 0769BP / MBEL55E).